Reading from the N-terminus, the 306-residue chain is Foldase protein PrsA (306 aa).

The N-terminal stretch at 1 to 20 (MRRKIALFLALIFVGVSLVS) is a signal peptide. Residue cysteine 21 is the site of N-palmitoyl cysteine attachment. Cysteine 21 carries the S-diacylglycerol cysteine lipid modification. The PpiC domain occupies 165-255 (FEVMRARHIL…YGYHIIKSEG (91 aa)).

The protein belongs to the PrsA family.

It is found in the cell membrane. The enzyme catalyses [protein]-peptidylproline (omega=180) = [protein]-peptidylproline (omega=0). Its function is as follows. Plays a major role in protein secretion by helping the post-translocational extracellular folding of several secreted proteins. This is Foldase protein PrsA from Caldanaerobacter subterraneus subsp. tengcongensis (strain DSM 15242 / JCM 11007 / NBRC 100824 / MB4) (Thermoanaerobacter tengcongensis).